Here is a 107-residue protein sequence, read N- to C-terminus: Prostate collagen triple helix protein (107 aa).

A disordered region spans residues 47–107 (PLIPRTPGSP…PTSPLFPFCP (61 aa)). Residues 81 to 100 (VGPKGPMLPLGPSGPVGPTS) are compositionally biased toward low complexity.

Expressed in prostate and testis. Weakly or not expressed in other tissues. Overexpressed in prostate cancers.

It is found in the cytoplasm. Its function is as follows. May be involved in growth and survival of prostate cancer cells through the TAF-Ibeta pathway. This chain is Prostate collagen triple helix protein (PCOTH), found in Homo sapiens (Human).